Reading from the N-terminus, the 81-residue chain is Centromere protein X (81 aa).

Met1 carries the N-acetylmethionine modification.

The protein belongs to the CENP-X/MHF2 family. In terms of assembly, heterodimer with CENPX, sometimes called MHF; this interaction stabilizes both partners. MHF heterodimers can assemble to form tetrameric structures. MHF also coassemble with CENPT-CENPW heterodimers at centromeres to form the tetrameric CENP-T-W-S-X complex. Forms a discrete complex with FANCM and CENPX, called FANCM-MHF; this interaction, probably mediated by direct binding between CENPS and FANCM, leads to synergistic activation of double-stranded DNA binding and strongly stimulates FANCM-mediated DNA remodeling. Recruited by FANCM to the Fanconi anemia (FA) core complex, which consists of CENPS, CENPX, FANCA, FANCB, FANCC, FANCE, FANCF, FANCG, FANCL, FANCM, FAAP24 and FAAP100. The FA core complex associates with Bloom syndrome (BLM) complex, which consists of at least BLM, DNA topoisomerase 3-alpha (TOP3A), RMI1/BLAP75, RPA1/RPA70 and RPA2/RPA32. The super complex between FA and BLM is called BRAFT.

It is found in the nucleus. The protein localises to the chromosome. Its subcellular location is the centromere. It localises to the kinetochore. Its function is as follows. DNA-binding component of the Fanconi anemia (FA) core complex. Required for the normal activation of the FA pathway, leading to monoubiquitination of the FANCI-FANCD2 complex in response to DNA damage, cellular resistance to DNA cross-linking drugs, and prevention of chromosomal breakage. In complex with CENPS (MHF heterodimer), crucial cofactor for FANCM in both binding and ATP-dependent remodeling of DNA. Stabilizes FANCM. In complex with CENPS and FANCM (but not other FANC proteins), rapidly recruited to blocked forks and promotes gene conversion at blocked replication forks. In complex with CENPS, CENPT and CENPW (CENP-T-W-S-X heterotetramer), involved in the formation of a functional kinetochore outer plate, which is essential for kinetochore-microtubule attachment and faithful mitotic progression. As a component of MHF and CENP-T-W-S-X complexes, binds DNA and bends it to form a nucleosome-like structure. DNA-binding function is fulfilled in the presence of CENPS, with the following preference for DNA substates: Holliday junction &gt; double-stranded &gt; splay arm &gt; single-stranded. Does not bind DNA on its own. The protein is Centromere protein X (CENPX) of Homo sapiens (Human).